A 193-amino-acid chain; its full sequence is SCO1 protein homolog (193 aa).

The signal sequence occupies residues 1–18 (MKVIKGLTAGLIFLFLCA). The N-palmitoyl cysteine moiety is linked to residue Cys19. Residue Cys19 is the site of S-diacylglycerol cysteine attachment. The region spanning 26–191 (DPLNYEVEPF…IISDVKSAST (166 aa)) is the Thioredoxin domain. Residues Cys64, Cys68, and His154 each coordinate Cu cation.

The protein belongs to the SCO1/2 family. In terms of assembly, monomer.

It localises to the cell membrane. In terms of biological role, necessary for insertion of copper into the active site of cytochrome c oxidase. May play a role in copper homeostasis or redox signaling. The chain is SCO1 protein homolog (ypmQ) from Bacillus subtilis (strain 168).